Consider the following 217-residue polypeptide: uncharacterized protein (217 aa).

Disordered stretches follow at residues 1-85 (MGVK…RGNT) and 167-189 (KLRS…EPDE). The segment covering 38 to 48 (AKSDKDKRKGS) has biased composition (basic and acidic residues). Positions 60-78 (NALPTKNLTTPPALNPLTT) are enriched in low complexity. The segment covering 172 to 189 (PHKDQHNSATNKDQEPDE) has biased composition (basic and acidic residues).

This is an uncharacterized protein from Saccharomyces cerevisiae (strain ATCC 204508 / S288c) (Baker's yeast).